Consider the following 207-residue polypeptide: Transcription antitermination protein NusB (207 aa).

Belongs to the NusB family.

Involved in transcription antitermination. Required for transcription of ribosomal RNA (rRNA) genes. Binds specifically to the boxA antiterminator sequence of the ribosomal RNA (rrn) operons. This chain is Transcription antitermination protein NusB, found in Trichodesmium erythraeum (strain IMS101).